A 123-amino-acid chain; its full sequence is Large ribosomal subunit protein bL12 (123 aa).

It belongs to the bacterial ribosomal protein bL12 family. Homodimer. Part of the ribosomal stalk of the 50S ribosomal subunit. Forms a multimeric L10(L12)X complex, where L10 forms an elongated spine to which 2 to 4 L12 dimers bind in a sequential fashion. Binds GTP-bound translation factors.

Its function is as follows. Forms part of the ribosomal stalk which helps the ribosome interact with GTP-bound translation factors. Is thus essential for accurate translation. This is Large ribosomal subunit protein bL12 from Laribacter hongkongensis (strain HLHK9).